A 351-amino-acid chain; its full sequence is uncharacterized protein (351 aa).

The disordered stretch occupies residues 1–61 (MNDKRKPSFQ…RDKQEVKETR (61 aa)). 2 stretches are compositionally biased toward basic and acidic residues: residues 16-38 (FQER…HFND) and 44-61 (RNEK…KETR).

It belongs to the class IV-like SAM-binding methyltransferase superfamily. RNA methyltransferase TrmH family.

This is an uncharacterized protein from Haemophilus influenzae (strain ATCC 51907 / DSM 11121 / KW20 / Rd).